Here is a 725-residue protein sequence, read N- to C-terminus: Catalase-peroxidase (725 aa).

The tryptophyl-tyrosyl-methioninium (Trp-Tyr) (with M-237) cross-link spans 88 to 211 (WHSAGTYRIQ…LAASEMGLIY (124 aa)). The active-site Proton acceptor is His-89. Positions 211 to 237 (YVNPEGPGREPDPLKAAQQIRETFKRM) form a cross-link, tryptophyl-tyrosyl-methioninium (Tyr-Met) (with W-88). His-252 contacts heme b.

Belongs to the peroxidase family. Peroxidase/catalase subfamily. As to quaternary structure, homodimer or homotetramer. Requires heme b as cofactor. In terms of processing, formation of the three residue Trp-Tyr-Met cross-link is important for the catalase, but not the peroxidase activity of the enzyme.

The enzyme catalyses H2O2 + AH2 = A + 2 H2O. It catalyses the reaction 2 H2O2 = O2 + 2 H2O. Functionally, bifunctional enzyme with both catalase and broad-spectrum peroxidase activity. This Symbiobacterium thermophilum (strain DSM 24528 / JCM 14929 / IAM 14863 / T) protein is Catalase-peroxidase.